A 281-amino-acid polypeptide reads, in one-letter code: Protein synthesis inhibitor I (281 aa).

Residue A2 is modified to N-acetylalanine. E175 is a catalytic residue.

This sequence belongs to the ribosome-inactivating protein family. Type 1 RIP subfamily.

It is found in the cytoplasm. It carries out the reaction Endohydrolysis of the N-glycosidic bond at one specific adenosine on the 28S rRNA.. Its function is as follows. Inhibits the elongation phase of protein synthesis. It inactivates fungal ribosomes even more effectively than mammalian ribosomes and is thought to function as a constitutive antifungal agent in plants. The polypeptide is Protein synthesis inhibitor I (RIP30) (Hordeum vulgare (Barley)).